The sequence spans 352 residues: Pejvakin (352 aa).

This sequence belongs to the gasdermin family. In terms of assembly, interacts with MAP1LC3B; interaction is direct. Interacts with IQGAP1. Interacts with ROCK2. Interacts with TRIOBP.

It is found in the peroxisome membrane. It localises to the cell projection. The protein resides in the cilium. Functionally, peroxisome-associated protein required to protect auditory hair cells against noise-induced damage. Acts by regulating noise-induced peroxisome proliferation in auditory hair cells and neurons, and promoting autophagic degradation of damaged peroxisomes (pexophagy). Noise overexposure increases reactive oxygen species (ROS) levels, causing oxidative damage to auditory hair cells and resulting in hearing loss. PJVK acts as a ROS sensor that recruits the autophagy machinery to trigger pexophagy of peroxisomes damaged by oxidative stress. In addition to pexophagy, also required to promote peroxisome proliferation in response to sound overstimulation. This chain is Pejvakin, found in Homo sapiens (Human).